The primary structure comprises 195 residues: Phenoloxidase subunit 1 (195 aa).

Residue His-10 participates in Cu cation binding. N-linked (GlcNAc...) asparagine glycans are attached at residues Asn-77, Asn-97, and Asn-98.

It belongs to the tyrosinase family. In terms of assembly, heterodimer. Cu(2+) serves as cofactor.

The protein resides in the secreted. It carries out the reaction 2 L-dopa + O2 = 2 L-dopaquinone + 2 H2O. The enzyme catalyses L-tyrosine + O2 = L-dopaquinone + H2O. Functionally, this is a copper-containing oxidase that functions in the formation of pigments such as melanins and other polyphenolic compounds. Catalyzes the rate-limiting conversions of tyrosine to DOPA, DOPA to DOPA-quinone and possibly 5,6 dihydroxyindole to indole-5'6 quinone. In Simulium damnosum (Black fly), this protein is Phenoloxidase subunit 1.